Here is a 602-residue protein sequence, read N- to C-terminus: Wings apart-like protein homolog 1 (602 aa).

The tract at residues 34-66 (NKQKRSPGQTVSKRLHKKQRVVSNPDLSLPSSP) is disordered. Positions 54-66 (VVSNPDLSLPSSP) are enriched in polar residues. Residues 160–492 (IQMKSIHELR…LGLVEESHEF (333 aa)) form the WAPL domain.

The protein belongs to the WAPL family.

Its subcellular location is the nucleus. It is found in the chromosome. In terms of biological role, regulator of sister chromatid cohesion in mitosis which negatively regulates cohesin association with chromatin. The polypeptide is Wings apart-like protein homolog 1 (wpl1) (Schizosaccharomyces pombe (strain 972 / ATCC 24843) (Fission yeast)).